The sequence spans 112 residues: UPF0060 membrane protein Daro_2632 (112 aa).

Helical transmembrane passes span 7 to 27, 34 to 54, 59 to 79, and 89 to 109; these read VLGLFAITALAEIIGCYLPWL, PVWLLIPAAVSLGLFAWLLTL, AGRIYAAYGGVYVAIALIWLW, and WDLVGSAVSLAGMAIIMLQPA.

Belongs to the UPF0060 family.

Its subcellular location is the cell inner membrane. The protein is UPF0060 membrane protein Daro_2632 of Dechloromonas aromatica (strain RCB).